The primary structure comprises 343 residues: Aspartate carbamoyltransferase catalytic subunit (343 aa).

Carbamoyl phosphate is bound by residues R91 and T92. Residue K119 coordinates L-aspartate. The carbamoyl phosphate site is built by R141, H171, and Q174. 2 residues coordinate L-aspartate: R204 and R259. Positions 300 and 301 each coordinate carbamoyl phosphate.

It belongs to the aspartate/ornithine carbamoyltransferase superfamily. ATCase family. Heterododecamer (2C3:3R2) of six catalytic PyrB chains organized as two trimers (C3), and six regulatory PyrI chains organized as three dimers (R2).

The enzyme catalyses carbamoyl phosphate + L-aspartate = N-carbamoyl-L-aspartate + phosphate + H(+). The protein operates within pyrimidine metabolism; UMP biosynthesis via de novo pathway; (S)-dihydroorotate from bicarbonate: step 2/3. Its function is as follows. Catalyzes the condensation of carbamoyl phosphate and aspartate to form carbamoyl aspartate and inorganic phosphate, the committed step in the de novo pyrimidine nucleotide biosynthesis pathway. The sequence is that of Aspartate carbamoyltransferase catalytic subunit from Burkholderia thailandensis (strain ATCC 700388 / DSM 13276 / CCUG 48851 / CIP 106301 / E264).